A 343-amino-acid polypeptide reads, in one-letter code: L-threonine 3-dehydrogenase (343 aa).

Cys-38 contributes to the Zn(2+) binding site. Catalysis depends on charge relay system residues Thr-40 and His-43. His-63, Glu-64, Cys-93, Cys-96, Cys-99, and Cys-107 together coordinate Zn(2+). Residues Ile-175, Asp-195, Arg-200, 262 to 264 (LGL), and 286 to 287 (IY) contribute to the NAD(+) site.

The protein belongs to the zinc-containing alcohol dehydrogenase family. Homotetramer. It depends on Zn(2+) as a cofactor.

Its subcellular location is the cytoplasm. It catalyses the reaction L-threonine + NAD(+) = (2S)-2-amino-3-oxobutanoate + NADH + H(+). The protein operates within amino-acid degradation; L-threonine degradation via oxydo-reductase pathway; glycine from L-threonine: step 1/2. Catalyzes the NAD(+)-dependent oxidation of L-threonine to 2-amino-3-ketobutyrate. The chain is L-threonine 3-dehydrogenase from Saccharopolyspora erythraea (strain ATCC 11635 / DSM 40517 / JCM 4748 / NBRC 13426 / NCIMB 8594 / NRRL 2338).